We begin with the raw amino-acid sequence, 155 residues long: Aspartate 1-decarboxylase (155 aa).

Residue S24 is the Schiff-base intermediate with substrate; via pyruvic acid of the active site. S24 is subject to Pyruvic acid (Ser). T56 contributes to the substrate binding site. The active-site Proton donor is Y57. 72 to 74 (GAA) contributes to the substrate binding site.

The protein belongs to the PanD family. As to quaternary structure, heterooctamer of four alpha and four beta subunits. Requires pyruvate as cofactor. Post-translationally, is synthesized initially as an inactive proenzyme, which is activated by self-cleavage at a specific serine bond to produce a beta-subunit with a hydroxyl group at its C-terminus and an alpha-subunit with a pyruvoyl group at its N-terminus.

It is found in the cytoplasm. The catalysed reaction is L-aspartate + H(+) = beta-alanine + CO2. Its pathway is cofactor biosynthesis; (R)-pantothenate biosynthesis; beta-alanine from L-aspartate: step 1/1. Catalyzes the pyruvoyl-dependent decarboxylation of aspartate to produce beta-alanine. This Methylocella silvestris (strain DSM 15510 / CIP 108128 / LMG 27833 / NCIMB 13906 / BL2) protein is Aspartate 1-decarboxylase.